Consider the following 1459-residue polypeptide: ARF guanine-nucleotide exchange factor 2 (1459 aa).

2 positions are modified to phosphoserine: serine 46 and serine 284. The SEC7 domain maps to 570–714; that stretch reads FNEKPKKGIP…IIMLNTDLHN (145 aa). Positions 1412–1459 are disordered; that stretch reads EKGNGSSSHGSAHEQTPESNDVEIEATAPIDDNTDDDNKPKLSDVEKD. Basic and acidic residues predominate over residues 1447–1459; sequence DDNKPKLSDVEKD.

In terms of assembly, interacts (via SEC7 domain) with DRS2 (via C-terminus); the interaction is direct. Interacts with GMH1.

It is found in the cytoplasm. The protein resides in the cytosol. Its subcellular location is the membrane. The protein localises to the golgi apparatus membrane. In terms of biological role, activates the ARF proteins by exchanging bound GDP for free GTP. Plays a role in maintaining mitochondrial morphology. Stimulates DRS2 flippase activity. This is ARF guanine-nucleotide exchange factor 2 (GEA2) from Saccharomyces cerevisiae (strain ATCC 204508 / S288c) (Baker's yeast).